The chain runs to 159 residues: Phosphopantetheine adenylyltransferase (159 aa).

Thr-10 contributes to the substrate binding site. Residues 10–11 (TF) and His-18 each bind ATP. Residues Lys-42, Met-74, and Arg-88 each coordinate substrate. ATP-binding positions include 89–91 (GLR), Glu-99, and 124–130 (WSFISSS).

It belongs to the bacterial CoaD family. Homohexamer. Mg(2+) serves as cofactor.

The protein resides in the cytoplasm. The enzyme catalyses (R)-4'-phosphopantetheine + ATP + H(+) = 3'-dephospho-CoA + diphosphate. The protein operates within cofactor biosynthesis; coenzyme A biosynthesis; CoA from (R)-pantothenate: step 4/5. Reversibly transfers an adenylyl group from ATP to 4'-phosphopantetheine, yielding dephospho-CoA (dPCoA) and pyrophosphate. This Yersinia pseudotuberculosis serotype I (strain IP32953) protein is Phosphopantetheine adenylyltransferase.